The primary structure comprises 1129 residues: PAN2-PAN3 deadenylation complex catalytic subunit PAN2 (1129 aa).

5 WD repeats span residues 20–60 (PPAV…YTSY), 104–146 (PDFK…DTLP), 148–183 (DAQYTIMKRAGQYLCAATKTGGIHILDSNSLSVIKV), 186–226 (GHTG…FSLK), and 280–319 (LYDSYLAGFEMAPSGEAFALADSNSNVHLWGSPAKVHFPE). The interval 320-457 (YSNPTEFADH…DLHLDDVTRK (138 aa)) is linker. Positions 396 to 427 (RTKRRNQIEVTRQTDRSSDSLTPPKFLSEKSR) are disordered. Residues 458–830 (DVPAMYGNVE…LPSVLTFQTK (373 aa)) form the USP domain. The Exonuclease domain maps to 880–1052 (VAIDAEFIRL…IEDATTALKL (173 aa)). A divalent metal cation contacts are provided by Asp-883, Glu-885, Asp-992, and Asp-1045. The segment at 1083-1129 (APGSGNRNSMPAGMTATGAGRDTPEPMTTPKKGGAFGGVGFRSPMRR) is disordered.

The protein belongs to the peptidase C19 family. PAN2 subfamily. Forms a heterotrimer with an asymmetric homodimer of the regulatory subunit PAN3 to form the poly(A)-nuclease (PAN) deadenylation complex. The cofactor is a divalent metal cation.

It localises to the cytoplasm. The enzyme catalyses Exonucleolytic cleavage of poly(A) to 5'-AMP.. Positively regulated by the regulatory subunit PAN3. Its function is as follows. Catalytic subunit of the poly(A)-nuclease (PAN) deadenylation complex, one of two cytoplasmic mRNA deadenylases involved in mRNA turnover. PAN specifically shortens poly(A) tails of RNA and the activity is stimulated by poly(A)-binding protein PAB1. PAN deadenylation is followed by rapid degradation of the shortened mRNA tails by the CCR4-NOT complex. Deadenylated mRNAs are then degraded by two alternative mechanisms, namely exosome-mediated 3'-5' exonucleolytic degradation, or deadenylation-dependent mRNA decaping and subsequent 5'-3' exonucleolytic degradation by XRN1. May also be involved in post-transcriptional maturation of mRNA poly(A) tails. The sequence is that of PAN2-PAN3 deadenylation complex catalytic subunit PAN2 from Phaeosphaeria nodorum (strain SN15 / ATCC MYA-4574 / FGSC 10173) (Glume blotch fungus).